The sequence spans 215 residues: 3-demethoxyubiquinol 3-hydroxylase (215 aa).

Fe cation-binding residues include E64, E94, H97, E146, E178, and H181.

The protein belongs to the COQ7 family. Fe cation serves as cofactor.

Its subcellular location is the cell membrane. The enzyme catalyses a 5-methoxy-2-methyl-3-(all-trans-polyprenyl)benzene-1,4-diol + AH2 + O2 = a 3-demethylubiquinol + A + H2O. It functions in the pathway cofactor biosynthesis; ubiquinone biosynthesis. In terms of biological role, catalyzes the hydroxylation of 2-nonaprenyl-3-methyl-6-methoxy-1,4-benzoquinol during ubiquinone biosynthesis. The chain is 3-demethoxyubiquinol 3-hydroxylase from Ectopseudomonas mendocina (strain ymp) (Pseudomonas mendocina).